A 159-amino-acid polypeptide reads, in one-letter code: ATP synthase subunit b 2 (159 aa).

The chain crosses the membrane as a helical span at residues 1 to 21 (MDATFWAFIALVIFVAIVVYM).

This sequence belongs to the ATPase B chain family. In terms of assembly, F-type ATPases have 2 components, F(1) - the catalytic core - and F(0) - the membrane proton channel. F(1) has five subunits: alpha(3), beta(3), gamma(1), delta(1), epsilon(1). F(0) has three main subunits: a(1), b(2) and c(10-14). The alpha and beta chains form an alternating ring which encloses part of the gamma chain. F(1) is attached to F(0) by a central stalk formed by the gamma and epsilon chains, while a peripheral stalk is formed by the delta and b chains.

It localises to the cell inner membrane. F(1)F(0) ATP synthase produces ATP from ADP in the presence of a proton or sodium gradient. F-type ATPases consist of two structural domains, F(1) containing the extramembraneous catalytic core and F(0) containing the membrane proton channel, linked together by a central stalk and a peripheral stalk. During catalysis, ATP synthesis in the catalytic domain of F(1) is coupled via a rotary mechanism of the central stalk subunits to proton translocation. Its function is as follows. Component of the F(0) channel, it forms part of the peripheral stalk, linking F(1) to F(0). In Brucella ovis (strain ATCC 25840 / 63/290 / NCTC 10512), this protein is ATP synthase subunit b 2.